The primary structure comprises 269 residues: Photosystem I assembly factor PSA3, chloroplastic (269 aa).

Residues 1–37 (MGALPVAHSLALTAAFLPCRRPAAHGRCRRRRYRAVV) constitute a chloroplast transit peptide.

The protein resides in the plastid. Its subcellular location is the chloroplast thylakoid membrane. In terms of biological role, nuclear genome-encoded factor required for the accumulation of photosystem I (PSI). Functions as a PSI biogenesis factor. Cooperates with PYG7 to promote the stable assembly of PSI in the thylakoid membrane. May target primarily the PsaC subunit. Does not seem to be required for the expression of chloroplast genes encoding PSI subunits. In Zea mays (Maize), this protein is Photosystem I assembly factor PSA3, chloroplastic.